The following is a 99-amino-acid chain: Integration host factor subunit alpha (99 aa).

The protein belongs to the bacterial histone-like protein family. Heterodimer of an alpha and a beta chain.

In terms of biological role, this protein is one of the two subunits of integration host factor, a specific DNA-binding protein that functions in genetic recombination as well as in transcriptional and translational control. In Xylella fastidiosa (strain 9a5c), this protein is Integration host factor subunit alpha (ihfA).